A 78-amino-acid polypeptide reads, in one-letter code: Conotoxin CaFr179 (78 aa).

An N-terminal signal peptide occupies residues 1–19 (MSGLGIMVLTLLLLVFMEA). Positions 20-44 (SHQDAGEKQATQRDAINVRRRRSLA) are excised as a propeptide. Disulfide bonds link C52-C64, C56-C72, and C63-C76. F77 carries the phenylalanine amide modification.

Belongs to the conotoxin O3 superfamily. In terms of tissue distribution, expressed by the venom duct.

It is found in the secreted. This Conus caracteristicus (Characteristic cone) protein is Conotoxin CaFr179.